The primary structure comprises 645 residues: 1-deoxy-D-xylulose-5-phosphate synthase (645 aa).

Residues H79 and 120–122 (AHS) each bind thiamine diphosphate. D155 contributes to the Mg(2+) binding site. Residues 156-157 (GA), N184, Y293, and E375 each bind thiamine diphosphate. Residue N184 participates in Mg(2+) binding.

The protein belongs to the transketolase family. DXPS subfamily. Homodimer. It depends on Mg(2+) as a cofactor. The cofactor is thiamine diphosphate.

It carries out the reaction D-glyceraldehyde 3-phosphate + pyruvate + H(+) = 1-deoxy-D-xylulose 5-phosphate + CO2. It participates in metabolic intermediate biosynthesis; 1-deoxy-D-xylulose 5-phosphate biosynthesis; 1-deoxy-D-xylulose 5-phosphate from D-glyceraldehyde 3-phosphate and pyruvate: step 1/1. Its function is as follows. Catalyzes the acyloin condensation reaction between C atoms 2 and 3 of pyruvate and glyceraldehyde 3-phosphate to yield 1-deoxy-D-xylulose-5-phosphate (DXP). In Ruegeria sp. (strain TM1040) (Silicibacter sp.), this protein is 1-deoxy-D-xylulose-5-phosphate synthase.